The primary structure comprises 408 residues: Na(+)/H(+) antiporter NhaA 2 (408 aa).

Transmembrane regions (helical) follow at residues 36 to 56 (GILL…GLGV), 79 to 99 (ILLW…GLEI), 115 to 135 (ALPV…YFLF), 145 to 165 (GWGI…SLLG), 174 to 194 (IFLA…IAVF), 197 to 217 (SELH…LMVF), 225 to 245 (LFFY…SGIH), 281 to 301 (FIIM…SEML), 310 to 330 (LGII…MSWL), 348 to 368 (VLGL…IALL), and 381 to 401 (FAIL…LSSY).

It belongs to the NhaA Na(+)/H(+) (TC 2.A.33) antiporter family.

Its subcellular location is the cell inner membrane. It catalyses the reaction Na(+)(in) + 2 H(+)(out) = Na(+)(out) + 2 H(+)(in). Its function is as follows. Na(+)/H(+) antiporter that extrudes sodium in exchange for external protons. This chain is Na(+)/H(+) antiporter NhaA 2, found in Flavobacterium johnsoniae (strain ATCC 17061 / DSM 2064 / JCM 8514 / BCRC 14874 / CCUG 350202 / NBRC 14942 / NCIMB 11054 / UW101) (Cytophaga johnsonae).